Consider the following 463-residue polypeptide: Fumarate hydratase class II (463 aa).

Substrate is bound by residues serine 97 to threonine 99, histidine 128 to aspartate 131, serine 138 to asparagine 140, and threonine 186. Histidine 187 acts as the Proton donor/acceptor in catalysis. Serine 317 is a catalytic residue. Residues serine 318 and lysine 323–asparagine 325 contribute to the substrate site.

The protein belongs to the class-II fumarase/aspartase family. Fumarase subfamily. In terms of assembly, homotetramer.

The protein resides in the cytoplasm. It catalyses the reaction (S)-malate = fumarate + H2O. Its pathway is carbohydrate metabolism; tricarboxylic acid cycle; (S)-malate from fumarate: step 1/1. Involved in the TCA cycle. Catalyzes the stereospecific interconversion of fumarate to L-malate. The protein is Fumarate hydratase class II of Helicobacter pylori (strain J99 / ATCC 700824) (Campylobacter pylori J99).